The following is a 183-amino-acid chain: Putative manganese efflux pump MntP (183 aa).

6 helical membrane-spanning segments follow: residues 8–28 (IIAL…VALG), 40–60 (FYIG…GMAV), 72–92 (ATYA…IASF), 108–128 (LFFA…LGIF), 133–153 (MVTI…GLFV), and 163–183 (SYSE…LLFL).

It belongs to the MntP (TC 9.B.29) family.

It localises to the cell membrane. Its function is as follows. Probably functions as a manganese efflux pump. This chain is Putative manganese efflux pump MntP, found in Geobacillus kaustophilus (strain HTA426).